The primary structure comprises 304 residues: Glutaminase (304 aa).

Substrate is bound by residues Ser-63, Asn-114, Glu-158, Asn-165, Tyr-189, Tyr-240, and Val-258.

This sequence belongs to the glutaminase family. As to quaternary structure, homotetramer.

It carries out the reaction L-glutamine + H2O = L-glutamate + NH4(+). The polypeptide is Glutaminase (Shewanella amazonensis (strain ATCC BAA-1098 / SB2B)).